The following is an 804-amino-acid chain: Cas scaffolding protein family member 4 (804 aa).

An SH3 domain is found at 11–73 (PKTLLARALY…PANRLQVLRE (63 aa)). 2 positions are modified to phosphoserine: Ser200 and Ser297. 3 disordered regions span residues 369–395 (LERG…DSDR), 607–628 (QRET…TEHS), and 642–686 (QQSP…TERK). Residues 380 to 390 (PWISGQTSFLS) are compositionally biased toward polar residues. The segment covering 649-664 (EKGKPTMEGKSNRNPD) has biased composition (basic and acidic residues).

It belongs to the CAS family. As to quaternary structure, interacts (via SH3 domain) with PTK2/FAK1 (via C-terminus). Phosphorylated on tyrosines by SRC.

Its subcellular location is the cytoplasm. It is found in the cytoskeleton. The protein resides in the cell junction. It localises to the focal adhesion. Functionally, docking protein that plays a role in tyrosine kinase-based signaling related to cell adhesion and cell spreading. Regulates PTK2/FAK1 activity, focal adhesion integrity, and cell spreading. The chain is Cas scaffolding protein family member 4 from Mus musculus (Mouse).